The primary structure comprises 625 residues: tRNA uridine 5-carboxymethylaminomethyl modification enzyme MnmG (625 aa).

11–16 (GAGHAG) is an FAD binding site. 271 to 285 (GPRYCPSIETKIVTF) lines the NAD(+) pocket.

It belongs to the MnmG family. Homodimer. Heterotetramer of two MnmE and two MnmG subunits. FAD serves as cofactor.

It localises to the cytoplasm. NAD-binding protein involved in the addition of a carboxymethylaminomethyl (cmnm) group at the wobble position (U34) of certain tRNAs, forming tRNA-cmnm(5)s(2)U34. The polypeptide is tRNA uridine 5-carboxymethylaminomethyl modification enzyme MnmG (Porphyromonas gingivalis (strain ATCC BAA-308 / W83)).